The primary structure comprises 415 residues: Peptide chain release factor subunit 1-2 (415 aa).

This sequence belongs to the eukaryotic release factor 1 family. In terms of assembly, heterodimer of two subunits, one of which binds GTP.

The protein resides in the cytoplasm. Functionally, directs the termination of nascent peptide synthesis (translation) in response to the termination codons UAA, UAG and UGA. The polypeptide is Peptide chain release factor subunit 1-2 (Methanosarcina acetivorans (strain ATCC 35395 / DSM 2834 / JCM 12185 / C2A)).